We begin with the raw amino-acid sequence, 514 residues long: 2,3-bisphosphoglycerate-independent phosphoglycerate mutase (514 aa).

Residues Asp-13 and Ser-63 each coordinate Mn(2+). Ser-63 acts as the Phosphoserine intermediate in catalysis. Substrate contacts are provided by residues His-124, 154 to 155, Arg-186, Arg-192, 258 to 261, and Lys-332; these read RD and RADR. Asp-399, His-403, Asp-440, His-441, and His-459 together coordinate Mn(2+).

The protein belongs to the BPG-independent phosphoglycerate mutase family. In terms of assembly, monomer. The cofactor is Mn(2+).

It catalyses the reaction (2R)-2-phosphoglycerate = (2R)-3-phosphoglycerate. It functions in the pathway carbohydrate degradation; glycolysis; pyruvate from D-glyceraldehyde 3-phosphate: step 3/5. Catalyzes the interconversion of 2-phosphoglycerate and 3-phosphoglycerate. The polypeptide is 2,3-bisphosphoglycerate-independent phosphoglycerate mutase (Legionella pneumophila (strain Lens)).